The sequence spans 565 residues: Periplasmic trehalase (565 aa).

The signal sequence occupies residues 1-30 (MKSPAPSRPQKMALIPACIFLCFAALSVQA). Substrate is bound by residues Arg152, 159–160 (WD), Asn196, 205–207 (RSQ), 277–279 (RPE), and Gly310. Catalysis depends on proton donor/acceptor residues Asp312 and Glu496. Glu511 provides a ligand contact to substrate. A disordered region spans residues 539–565 (CDNVPATRPLSESTTQPLKQKEAEPTP).

Belongs to the glycosyl hydrolase 37 family. As to quaternary structure, monomer.

The protein localises to the periplasm. It carries out the reaction alpha,alpha-trehalose + H2O = alpha-D-glucose + beta-D-glucose. Functionally, provides the cells with the ability to utilize trehalose at high osmolarity by splitting it into glucose molecules that can subsequently be taken up by the phosphotransferase-mediated uptake system. The protein is Periplasmic trehalase of Escherichia coli O1:K1 / APEC.